A 412-amino-acid chain; its full sequence is Mannose-1-phosphate guanylyltransferase regulatory subunit alpha (412 aa).

The tract at residues 6 to 259 (TKAIILVGGP…VGFWRQIKNA (254 aa)) is substrate-binding domain. Positions 88 and 255 each coordinate GDP-alpha-D-mannose. Residues 281–412 (LKKGNNIIGN…DRNYNNEIIL (132 aa)) are hexapeptide repeat domain.

This sequence belongs to the transferase hexapeptide repeat family. As to quaternary structure, component of the GMPPA-GMPPB mannose-1-phosphate guanylyltransferase complex composed of 4 gmppA subunits and 8 gmppB subunits; the complex is organized into three layers, a central layer made up of 2 gmppA dimers sandwiched between two layers each made up of 2 gmppB dimers.

Its function is as follows. Regulatory subunit of the GMPPA-GMPPB mannose-1-phosphate guanylyltransferase complex; reduces the catalytic activity of GMPPB when part of the complex. Mediates allosteric feedback inhibition of GMPPB catalytic activity upon binding GDP-alpha-D-mannose. Together with GMPPB regulates GDP-alpha-D-mannose levels. The sequence is that of Mannose-1-phosphate guanylyltransferase regulatory subunit alpha (gmppA) from Dictyostelium discoideum (Social amoeba).